We begin with the raw amino-acid sequence, 123 residues long: UPF0738 protein BCE33L1094 (123 aa).

This sequence belongs to the UPF0738 family.

This Bacillus cereus (strain ZK / E33L) protein is UPF0738 protein BCE33L1094.